Here is a 1085-residue protein sequence, read N- to C-terminus: Voltage-dependent calcium channel subunit alpha-2/delta-3 (1085 aa).

Positions Met1–Ser33 are cleaved as a signal peptide. The Extracellular portion of the chain corresponds to Glu34 to Gly1062. A glycan (N-linked (GlcNAc...) asparagine) is linked at Asn166. The region spanning Asp256–Leu438 is the VWFA domain. Asp262, Ser264, and Ser266 together coordinate a divalent metal cation. The MIDAS-like motif motif lies at Asp262–Ser266. A glycan (N-linked (GlcNAc...) asparagine) is linked at Asn309. Cysteines 412 and 1049 form a disulfide. The Cache domain occupies Trp452–Arg543. N-linked (GlcNAc...) asparagine glycosylation is found at Asn547 and Asn626. Tyr918 bears the Phosphotyrosine mark. The helical transmembrane segment at Gly1063–Phe1083 threads the bilayer. The Cytoplasmic segment spans residues Ser1084–Arg1085.

Belongs to the calcium channel subunit alpha-2/delta family. As to quaternary structure, dimer formed of alpha-2-2 and delta-2 chains; disulfide-linked. Voltage-dependent calcium channels are multisubunit complexes, consisting of alpha-1 (CACNA1), alpha-2 (CACNA2D), beta (CACNB) and delta (CACNA2D) subunits in a 1:1:1:1 ratio. In terms of processing, N-glycosylated. Post-translationally, may be proteolytically processed into subunits alpha-2-3 and delta-3 that are disulfide-linked. It is however unclear whether such cleavage really takes place in vivo and has a functional role. In heart, it is expressed in atrium but not in ventricle.

The protein localises to the membrane. Functionally, the alpha-2/delta subunit of voltage-dependent calcium channels regulates calcium current density and activation/inactivation kinetics of the calcium channel. Acts as a regulatory subunit for P/Q-type calcium channel (CACNA1A), N-type (CACNA1B), L-type (CACNA1C OR CACNA1D) but not T-type (CACNA1G). The sequence is that of Voltage-dependent calcium channel subunit alpha-2/delta-3 (Cacna2d3) from Rattus norvegicus (Rat).